The sequence spans 58 residues: Metallothionein (58 aa).

The tract at residues 1–29 is beta; sequence PDPCCAEGTCECEEGKCKAGCKCTSCRCS. A divalent metal cation-binding residues include Cys4, Cys5, Cys10, Cys12, Cys17, Cys21, Cys23, Cys26, Cys28, Cys31, Cys34, Cys38, Cys40, Cys46, Cys50, Cys54, Cys56, and Cys57. An alpha region spans residues 30–58; sequence PCEKCTSECECKSKEECAKNCTKPCSCCP.

Functionally, metallothioneins have a high content of cysteine residues that bind various heavy metals. Class I MTS in crustacea are involved in the sequestration of elevated levels of heavy-metal ions. This Potamon potamios protein is Metallothionein.